A 757-amino-acid polypeptide reads, in one-letter code: Mitofusin-2 (757 aa).

At 1-604 (MSLLFSRCNS…TQEELMVSMV (604 aa)) the chain is on the cytoplasmic side. The tract at residues 30 to 94 (KHFVTAKKKI…VRGISEVLAR (65 aa)) is part of a helix bundle domain, formed by helices from N-terminal and C-terminal regions. Positions 93–342 (ARRHMKVAFF…VRMFEFQNFE (250 aa)) constitute a Dynamin-type G domain. The interval 103 to 110 (GRTSNGKS) is G1 motif. 106–111 (SNGKST) serves as a coordination point for GTP. Thr111 carries the phosphothreonine; by PINK1 modification. Residues 129–130 (TT) form a G2 motif region. Residues 199 to 202 (DSPG) are G3 motif. 258-261 (NRWD) provides a ligand contact to GTP. The segment at 258 to 261 (NRWD) is G4 motif. A region of interest (G5 motif) is located at residue Glu288. Residues Ser305 and Lys307 each coordinate GTP. Residues 359–385 (EQHTVRAKQIAEAVRLIMDSLHIAAQE) are part of a helix bundle domain, formed by helices from N-terminal and C-terminal regions. The stretch at 406–434 (KQLELLAQDYKLRIKQITEEVERQVSTAM) forms a coiled coil. Position 442 is a phosphoserine (Ser442). Residues 605 to 625 (TGLASLTSRTSMGILVVGGVV) traverse the membrane as a helical segment. A topological domain (mitochondrial intermembrane) is located at residue Trp626. The chain crosses the membrane as a helical span at residues 627–647 (KAVGWRLIALSFGLYGLLYVY). At 648–757 (ERLTWTTKAK…FTHQYLQPSR (110 aa)) the chain is on the cytoplasmic side. Positions 696-738 (FAHLCQQVDITRDNLEQEIAAMNKKVEALDSLQSRAKLLRNKA) form a coiled coil. The segment at 722–753 (EALDSLQSRAKLLRNKAGWLDSELNMFTHQYL) is part of a helix bundle domain, formed by helices from N-terminal and C-terminal regions.

It belongs to the TRAFAC class dynamin-like GTPase superfamily. Dynamin/Fzo/YdjA family. Mitofusin subfamily. As to quaternary structure, forms homomultimers and heteromultimers with MFN1. Oligomerization is essential for mitochondrion fusion. Interacts with VAT1. Interacts with STOML2; may form heterooligomers. Interacts (phosphorylated) with PRKN. Interacts with EIF2AK3. Interacts with THG1L; THG1L probably functions as a guanyl-nucleotide exchange factor/GEF, activating MFN2. Phosphorylated by PINK1. In terms of processing, ubiquitinated by non-degradative ubiquitin by PRKN, promoting mitochondrial fusion; deubiquitination by USP30 inhibits mitochondrial fusion. Ubiquitinated by HUWE1 when dietary stearate (C18:0) levels are low; ubiquitination inhibits mitochondrial fusion. As to expression, ubiquitous. Expression is markedly reduced in ApoE-knockout mouse atherosclerotic arteries.

It is found in the mitochondrion outer membrane. It catalyses the reaction GTP + H2O = GDP + phosphate + H(+). Its function is as follows. Mitochondrial outer membrane GTPase that mediates mitochondrial clustering and fusion. Mitochondria are highly dynamic organelles, and their morphology is determined by the equilibrium between mitochondrial fusion and fission events. Overexpression induces the formation of mitochondrial networks. Membrane clustering requires GTPase activity and may involve a major rearrangement of the coiled coil domains. Plays a central role in mitochondrial metabolism and may be associated with obesity and/or apoptosis processes. Plays an important role in the regulation of vascular smooth muscle cell proliferation. Involved in the clearance of damaged mitochondria via selective autophagy (mitophagy). Is required for PRKN recruitment to dysfunctional mitochondria. Involved in the control of unfolded protein response (UPR) upon ER stress including activation of apoptosis and autophagy during ER stress. Acts as an upstream regulator of EIF2AK3 and suppresses EIF2AK3 activation under basal conditions. The protein is Mitofusin-2 (Mfn2) of Mus musculus (Mouse).